The primary structure comprises 41 residues: MKIRNSLKSAKVRDKDCRVVRRRGRVYIINKKNPRMKARQG.

Belongs to the bacterial ribosomal protein bL36 family.

In Gluconobacter oxydans (strain 621H) (Gluconobacter suboxydans), this protein is Large ribosomal subunit protein bL36.